A 311-amino-acid polypeptide reads, in one-letter code: tRNA-cytidine(32) 2-sulfurtransferase (311 aa).

A PP-loop motif motif is present at residues 47-52 (SGGKDS). The [4Fe-4S] cluster site is built by C122, C125, and C213.

It belongs to the TtcA family. Homodimer. Mg(2+) is required as a cofactor. It depends on [4Fe-4S] cluster as a cofactor.

The protein localises to the cytoplasm. The enzyme catalyses cytidine(32) in tRNA + S-sulfanyl-L-cysteinyl-[cysteine desulfurase] + AH2 + ATP = 2-thiocytidine(32) in tRNA + L-cysteinyl-[cysteine desulfurase] + A + AMP + diphosphate + H(+). It functions in the pathway tRNA modification. Functionally, catalyzes the ATP-dependent 2-thiolation of cytidine in position 32 of tRNA, to form 2-thiocytidine (s(2)C32). The sulfur atoms are provided by the cysteine/cysteine desulfurase (IscS) system. This chain is tRNA-cytidine(32) 2-sulfurtransferase, found in Klebsiella pneumoniae subsp. pneumoniae (strain ATCC 700721 / MGH 78578).